A 298-amino-acid chain; its full sequence is Glycine--tRNA ligase alpha subunit (298 aa).

It belongs to the class-II aminoacyl-tRNA synthetase family. Tetramer of two alpha and two beta subunits.

The protein resides in the cytoplasm. It catalyses the reaction tRNA(Gly) + glycine + ATP = glycyl-tRNA(Gly) + AMP + diphosphate. In Neisseria meningitidis serogroup C / serotype 2a (strain ATCC 700532 / DSM 15464 / FAM18), this protein is Glycine--tRNA ligase alpha subunit.